The sequence spans 276 residues: Type II pantothenate kinase (276 aa).

8-15 serves as a coordination point for ATP; sequence DAGGTLTK. Residue Glu76 is the Proton acceptor of the active site. ATP contacts are provided by residues Thr105, 127 to 131, Phe143, and Ser230; that span reads GGTIM.

It belongs to the type II pantothenate kinase family. As to quaternary structure, homodimer.

It localises to the cytoplasm. The enzyme catalyses (R)-pantothenate + ATP = (R)-4'-phosphopantothenate + ADP + H(+). It participates in cofactor biosynthesis; coenzyme A biosynthesis; CoA from (R)-pantothenate: step 1/5. Its function is as follows. Catalyzes the phosphorylation of pantothenate (Pan), the first step in CoA biosynthesis. In Bacillus cereus (strain AH820), this protein is Type II pantothenate kinase.